The following is a 337-amino-acid chain: G-protein coupled receptor 65 (337 aa).

Over 1–5 the chain is Extracellular; it reads MNSTC. Residue N2 is glycosylated (N-linked (GlcNAc...) asparagine). 2 disulfides stabilise this stretch: C5-C160 and C87-C170. Residues 6 to 42 form a helical membrane-spanning segment; that stretch reads IEEQHDLDHYLFPIVYIFVIIVSIPANIGSLCVSFLQ. At 43 to 46 the chain is on the cytoplasmic side; sequence AKKE. A helical membrane pass occupies residues 47 to 77; that stretch reads SELGIYLFSLSLSDLLYALTLPLWIDYTWNK. The Extracellular segment spans residues 78-82; sequence DNWTF. N79 carries N-linked (GlcNAc...) asparagine glycosylation. Residues 83–118 form a helical membrane-spanning segment; sequence SPALCKGSAFLMYMNFYSSTAFLTCIAVDRYLAVVY. Residues 119–126 are Cytoplasmic-facing; that stretch reads PLKFFFLR. The chain crosses the membrane as a helical span at residues 127 to 153; the sequence is TRRFALMVSLSIWILETIFNAVMLWED. Residues 154-174 lie on the Extracellular side of the membrane; that stretch reads ETVVEYCDAEKSNFTLCYDKY. The extracellular loop 2 (ECL2) stretch occupies residues 154–174; the sequence is ETVVEYCDAEKSNFTLCYDKY. N-linked (GlcNAc...) asparagine glycosylation is present at N166. A helical membrane pass occupies residues 175 to 212; that stretch reads PLEKWQINLNLFRTCTGYAIPLVTILICNRKVYQAVRH. The Cytoplasmic segment spans residues 213–216; that stretch reads NKAT. The helical transmembrane segment at 217 to 252 threads the bilayer; the sequence is ENKEKKRIIKLLVSITVTFVLCFTPFHVMLLIRCIL. Over 253-264 the chain is Extracellular; the sequence is EHAVNFEDHSNS. Residues 265–293 traverse the membrane as a helical segment; sequence GKRTYTMYRITVALTSLNCVADPILYCFV. Residues 294–337 are Cytoplasmic-facing; sequence TETGRYDMWNILKFCTGRCNTSQRQRKRILSVSTKDTMELEVLE.

It belongs to the G-protein coupled receptor 1 family. Predominantly expressed in thymus, spleen, lymph nodes, small intestine, lung, placenta and peripheral blood leukocytes.

The protein resides in the cell membrane. Its subcellular location is the early endosome membrane. It localises to the late endosome membrane. Its activity is regulated as follows. Activated by a network of residues that connects an extracellular-facing cavity to Glu-142, a conserved charged residue buried in the transmembrane core of the receptor. Protonation likely drives conformational changes in extracellular loop 2 (ECL2), which stabilizes movement of transmembrane 3 (TM3) and a series of rearrangements that connect the extracellular-facing cavity to Glu-142, a residue only conserved in proton-sensing G-protein coupled receptors. Activated by BTB09089, a positive allosteric modulator. Functionally, proton-sensing G-protein coupled receptor activated by extracellular pH, which is required to monitor pH changes and generate adaptive reactions. Activated by an optimal pH of 7.4. Ligand binding causes a conformation change that triggers signaling via guanine nucleotide-binding proteins (G proteins) and modulates the activity of downstream effectors, such as adenylate cyclase. GPR65 is mainly coupled to G(s) G proteins and mediates activation of adenylate cyclase activity. May also act as a receptor for the glycosphingolipid psychosine (PSY) and several related glycosphingolipids. Plays a role in immune response by maintaining lysosome function and regulating T-cell metabolism. Acts as a regulator of inflammation by mediating pH-sensing of extracellular acidification which takes place in inflamed tissues: activation regulates endo-lysosomal function of immune cells and T-cell metabolism. Constitutively active in endosomes and stimulates adenylate cyclase production from endosomes independently from extracellular pH changes. This Homo sapiens (Human) protein is G-protein coupled receptor 65.